Here is a 438-residue protein sequence, read N- to C-terminus: Coenzyme A disulfide reductase (438 aa).

Residue 8-33 (GAVAGGATCASQIRRLDKESDIIIFE) coordinates FAD. Threonine 15, glutamine 19, arginine 22, serine 39, and asparagine 42 together coordinate substrate. Cysteine 43 functions as the Nucleophile in the catalytic mechanism. Cysteine 43 functions as the Redox-active in the catalytic mechanism. Lysine 71 contributes to the substrate binding site. 151–166 (VLVVGAGYVSLEVLEN) serves as a coordination point for NADP(+). An FAD-binding site is contributed by 267-277 (TNVPNIYAIGD). Histidine 299 serves as a coordination point for substrate. Tyrosine 419 contributes to the FAD binding site. Lysine 427 is a binding site for substrate.

This sequence belongs to the class-III pyridine nucleotide-disulfide oxidoreductase family. In terms of assembly, homodimer. FAD is required as a cofactor.

The catalysed reaction is NADP(+) + 2 CoA = CoA-disulfide + NADPH + H(+). Functionally, catalyzes specifically the NADPH-dependent reduction of coenzyme A disulfide. Is also active with other disulfide substrates containing at least one 4'-phosphopantethienyl moiety such as 4,4'-diphosphopantethine, but is not able to reduce oxidized glutathione, cystine, pantethine, or H(2)O(2). This is Coenzyme A disulfide reductase (cdr) from Staphylococcus aureus (strain NCTC 8325 / PS 47).